The following is a 24-amino-acid chain: Humanin-like 10 (24 aa).

It belongs to the humanin family. As to expression, expressed in mature brain, thyroid gland and testis.

The protein localises to the secreted. It localises to the cytoplasm. Its function is as follows. Plays a role as a neuroprotective and antiapoptotic factor. The polypeptide is Humanin-like 10 (Homo sapiens (Human)).